The following is a 304-amino-acid chain: UDP-N-acetylenolpyruvoylglucosamine reductase (304 aa).

One can recognise an FAD-binding PCMH-type domain in the interval 33 to 198 (IGGPADLLVM…LEVVLALQEG (166 aa)). Arg-177 is an active-site residue. The active-site Proton donor is the Ser-227. Residue Glu-297 is part of the active site.

It belongs to the MurB family. FAD is required as a cofactor.

Its subcellular location is the cytoplasm. The catalysed reaction is UDP-N-acetyl-alpha-D-muramate + NADP(+) = UDP-N-acetyl-3-O-(1-carboxyvinyl)-alpha-D-glucosamine + NADPH + H(+). The protein operates within cell wall biogenesis; peptidoglycan biosynthesis. Its function is as follows. Cell wall formation. The sequence is that of UDP-N-acetylenolpyruvoylglucosamine reductase from Alkaliphilus metalliredigens (strain QYMF).